The chain runs to 254 residues: 3-deoxy-manno-octulosonate cytidylyltransferase (254 aa).

Belongs to the KdsB family.

The protein localises to the cytoplasm. The enzyme catalyses 3-deoxy-alpha-D-manno-oct-2-ulosonate + CTP = CMP-3-deoxy-beta-D-manno-octulosonate + diphosphate. Its pathway is nucleotide-sugar biosynthesis; CMP-3-deoxy-D-manno-octulosonate biosynthesis; CMP-3-deoxy-D-manno-octulosonate from 3-deoxy-D-manno-octulosonate and CTP: step 1/1. The protein operates within bacterial outer membrane biogenesis; lipopolysaccharide biosynthesis. Activates KDO (a required 8-carbon sugar) for incorporation into bacterial lipopolysaccharide in Gram-negative bacteria. The polypeptide is 3-deoxy-manno-octulosonate cytidylyltransferase (Bordetella petrii (strain ATCC BAA-461 / DSM 12804 / CCUG 43448)).